We begin with the raw amino-acid sequence, 248 residues long: 1-(5-phosphoribosyl)-5-[(5-phosphoribosylamino)methylideneamino] imidazole-4-carboxamide isomerase (248 aa).

Asp8 functions as the Proton acceptor in the catalytic mechanism. The active-site Proton donor is Asp129.

It belongs to the HisA/HisF family.

The protein localises to the cytoplasm. It catalyses the reaction 1-(5-phospho-beta-D-ribosyl)-5-[(5-phospho-beta-D-ribosylamino)methylideneamino]imidazole-4-carboxamide = 5-[(5-phospho-1-deoxy-D-ribulos-1-ylimino)methylamino]-1-(5-phospho-beta-D-ribosyl)imidazole-4-carboxamide. Its pathway is amino-acid biosynthesis; L-histidine biosynthesis; L-histidine from 5-phospho-alpha-D-ribose 1-diphosphate: step 4/9. In Rhizobium johnstonii (strain DSM 114642 / LMG 32736 / 3841) (Rhizobium leguminosarum bv. viciae), this protein is 1-(5-phosphoribosyl)-5-[(5-phosphoribosylamino)methylideneamino] imidazole-4-carboxamide isomerase.